The primary structure comprises 363 residues: D-alanine--D-alanine ligase (363 aa).

One can recognise an ATP-grasp domain in the interval 148–353 (KKLLAAEGLP…YGTLVSTLIE (206 aa)). Residue 176-231 (RERLGLPVFVKPARAGSSIGITKVDDWAALDTAIAAAREHDPKVIVEAGIVGREVE) participates in ATP binding. Mg(2+)-binding residues include D308, E320, and N322.

The protein belongs to the D-alanine--D-alanine ligase family. Mg(2+) serves as cofactor. Requires Mn(2+) as cofactor.

The protein resides in the cytoplasm. It catalyses the reaction 2 D-alanine + ATP = D-alanyl-D-alanine + ADP + phosphate + H(+). It participates in cell wall biogenesis; peptidoglycan biosynthesis. Functionally, cell wall formation. In Nocardia farcinica (strain IFM 10152), this protein is D-alanine--D-alanine ligase.